The sequence spans 960 residues: Leucine-rich repeat receptor-like serine/threonine-protein kinase SKM1 (960 aa).

An N-terminal signal peptide occupies residues Met-1 to Ala-29. The Extracellular segment spans residues Asn-30–Trp-634. Cys-61 and Cys-68 are disulfide-bonded. N-linked (GlcNAc...) asparagine glycans are attached at residues Asn-70, Asn-83, Asn-103, Asn-108, Asn-129, and Asn-134. LRR repeat units follow at residues Ile-71–Leu-96, Pro-97–Thr-120, Ser-122–Asn-146, Thr-149–Phe-168, Ser-169–Arg-194, Glu-196–Met-216, Lys-217–Leu-240, Ser-241–Leu-264, Lys-265–Leu-288, Asn-290–Met-312, Gln-313–Leu-336, Arg-338–His-360, Asn-361–Ser-384, His-386–Cys-408, Gln-409–Leu-432, Leu-434–Met-454, Pro-455–Ser-477, Lys-478–Phe-501, Glu-503–Cys-525, Lys-526–Phe-549, Gln-550–Ile-573, and Ser-575–Ala-598. Asn-191 carries N-linked (GlcNAc...) asparagine glycosylation. A CLE45 peptide binding motif is present at residues Trp-221–Tyr-226. Asn-228 and Asn-252 each carry an N-linked (GlcNAc...) asparagine glycan. The N-linked (GlcNAc...) asparagine glycan is linked to Asn-324. N-linked (GlcNAc...) asparagine glycans are attached at residues Asn-362 and Asn-372. Asn-537 carries an N-linked (GlcNAc...) asparagine glycan. Asn-580 and Asn-600 each carry an N-linked (GlcNAc...) asparagine glycan. Residues Leu-635–Val-655 form a helical membrane-spanning segment. Topologically, residues Leu-656–Ala-960 are cytoplasmic. The Protein kinase domain maps to Phe-691–Leu-953. Phosphothreonine is present on Thr-692. ATP contacts are provided by residues Leu-697–Val-705 and Lys-717. Residue Tyr-834 is modified to Phosphotyrosine.

The protein belongs to the protein kinase superfamily. Ser/Thr protein kinase family. Self-interacts. Binds to CLE45 present in the pistil, particularly under relatively high temperature (at 30 degrees Celsius). Expressed in pollen grains and roots vascular tissues. Present in roots.

It is found in the cell membrane. The catalysed reaction is L-seryl-[protein] + ATP = O-phospho-L-seryl-[protein] + ADP + H(+). It catalyses the reaction L-threonyl-[protein] + ATP = O-phospho-L-threonyl-[protein] + ADP + H(+). Functionally, receptor with a serine/threonine-protein kinase activity. Together with SKM2, LRR-rich receptor-like kinase (LRR-RLK) required for male fertility by the perception of CLE43 and CLE45 peptides and the transduction of their promoting action in pollen tubes, especially under relatively high temperature (at 30 degrees Celsius), thus conferring tolerance against high temperature probably through the maintenance of mitochondrial activity. Seems to not be involved in the perception of CLE45 peptide in roots. This chain is Leucine-rich repeat receptor-like serine/threonine-protein kinase SKM1, found in Arabidopsis thaliana (Mouse-ear cress).